The primary structure comprises 50 residues: Large ribosomal subunit protein bL33B (50 aa).

It belongs to the bacterial ribosomal protein bL33 family.

The sequence is that of Large ribosomal subunit protein bL33B (rpmG2) from Enterococcus faecalis (strain ATCC 700802 / V583).